The following is a 414-amino-acid chain: Probable 1-acylglycerol-3-phosphate O-acyltransferase (414 aa).

Residues 117-382 (PTLVMVHGYG…GGHFVFIDNP (266 aa)) enclose the AB hydrolase-1 domain. The GXSXG motif lies at 193 to 197 (GHSFG). The short motif at 375 to 380 (HFVFID) is the HXXXXD motif element.

Belongs to the peptidase S33 family. ABHD4/ABHD5 subfamily.

The protein localises to the cytoplasm. It carries out the reaction a 1-acyl-sn-glycero-3-phosphate + an acyl-CoA = a 1,2-diacyl-sn-glycero-3-phosphate + CoA. Lysophosphatidic acid acyltransferase which functions in phosphatidic acid biosynthesis. May regulate neutral lipid accumulation and participate in the regulation of lipid turnover in vegetative cells. May possess additional triacylglycerol lipase and phospholipase A2 activities in vitro. The protein is Probable 1-acylglycerol-3-phosphate O-acyltransferase of Oryza sativa subsp. japonica (Rice).